We begin with the raw amino-acid sequence, 109 residues long: Protein reprimo (109 aa).

Asn7 and Asn18 each carry an N-linked (GlcNAc...) asparagine glycan. Residues 56–76 traverse the membrane as a helical segment; that stretch reads VVQIAVMCVLSLTVVFGIFFL. Ser98 is modified (phosphoserine).

The protein belongs to the reprimo family.

The protein resides in the cytoplasm. It localises to the membrane. Functionally, may be involved in the regulation of p53-dependent G2 arrest of the cell cycle. Seems to induce cell cycle arrest by inhibiting CDK1 activity and nuclear translocation of the CDC2 cyclin B1 complex. This chain is Protein reprimo (Rprm), found in Rattus norvegicus (Rat).